A 229-amino-acid chain; its full sequence is 2-C-methyl-D-erythritol 4-phosphate cytidylyltransferase (229 aa).

This sequence belongs to the IspD/TarI cytidylyltransferase family. IspD subfamily.

It catalyses the reaction 2-C-methyl-D-erythritol 4-phosphate + CTP + H(+) = 4-CDP-2-C-methyl-D-erythritol + diphosphate. Its pathway is isoprenoid biosynthesis; isopentenyl diphosphate biosynthesis via DXP pathway; isopentenyl diphosphate from 1-deoxy-D-xylulose 5-phosphate: step 2/6. Functionally, catalyzes the formation of 4-diphosphocytidyl-2-C-methyl-D-erythritol from CTP and 2-C-methyl-D-erythritol 4-phosphate (MEP). This is 2-C-methyl-D-erythritol 4-phosphate cytidylyltransferase from Clostridium botulinum (strain 657 / Type Ba4).